Reading from the N-terminus, the 638-residue chain is Mediator of RNA polymerase II transcription subunit 17 (638 aa).

Positions 1-21 are disordered; sequence MSDSFNLPLRPLTEKRERPDP.

This sequence belongs to the Mediator complex subunit 17 family. Component of the Mediator complex.

Its subcellular location is the nucleus. Functionally, component of the Mediator complex, a coactivator involved in the regulated transcription of nearly all RNA polymerase II-dependent genes. Mediator functions as a bridge to convey information from gene-specific regulatory proteins to the basal RNA polymerase II transcription machinery. Mediator is recruited to promoters by direct interactions with regulatory proteins and serves as a scaffold for the assembly of a functional preinitiation complex with RNA polymerase II and the general transcription factors. The protein is Mediator of RNA polymerase II transcription subunit 17 (srb4) of Aspergillus oryzae (strain ATCC 42149 / RIB 40) (Yellow koji mold).